We begin with the raw amino-acid sequence, 128 residues long: Large ribosomal subunit protein bL17 (128 aa).

It belongs to the bacterial ribosomal protein bL17 family. In terms of assembly, part of the 50S ribosomal subunit. Contacts protein L32.

The chain is Large ribosomal subunit protein bL17 from Streptococcus equi subsp. zooepidemicus (strain H70).